The sequence spans 416 residues: UV excision repair protein RAD23 homolog B (416 aa).

Residues 1-79 (MQVTLKTLQQ…VVVMVTKPKA (79 aa)) form the Ubiquitin-like domain. Over residues 83–111 (AVPATTQPSSTPSPTAVSSSPAVAAAQAP) the composition is skewed to low complexity. The tract at residues 83–175 (AVPATTQPSS…STPGDSSRSN (93 aa)) is disordered. The span at 112-121 (APTPALPPTS) shows a compositional bias: pro residues. Low complexity predominate over residues 122 to 143 (TPASTAPASTTASSEPAPAGAT). At T155 the chain carries Phosphothreonine. Phosphoserine is present on residues S160 and S174. T186 is modified (phosphothreonine). One can recognise a UBA 1 domain in the interval 188–228 (QSYENMVTEIMSMGYEREQVIAALRASFNNPDRAVEYLLMG). S199 is modified (phosphoserine). Y202 carries the post-translational modification Phosphotyrosine. The region spanning 274–317 (HPLEFLRNQPQFQQMRQIIQQNPSLLPALLQQIGRENPQLLQQI) is the STI1 domain. Residues 333-356 (QEAGSQGGGGGGGGGGGGGGGGGI) are disordered. A compositionally biased stretch (gly residues) spans 337–356 (SQGGGGGGGGGGGGGGGGGI). Residues 371 to 411 (PQEKEAIERLKALGFPEGLVIQAYFACEKNENLAANFLLQQ) form the UBA 2 domain.

Belongs to the RAD23 family. In terms of assembly, component of the XPC complex composed of XPC, RAD23B and CETN2. Interacts with NGLY1 and PSMC1. Interacts with ATXN3. Interacts with AMFR. Interacts with VCP; the interaction is indirect and mediated by NGLY1.

It localises to the nucleus. It is found in the cytoplasm. Its function is as follows. Multiubiquitin chain receptor involved in modulation of proteasomal degradation. Binds to polyubiquitin chains. Proposed to be capable to bind simultaneously to the 26S proteasome and to polyubiquitinated substrates and to deliver ubiquitinated proteins to the proteasome. May play a role in endoplasmic reticulum-associated degradation (ERAD) of misfolded glycoproteins by association with PNGase and delivering deglycosylated proteins to the proteasome. Involved in global genome nucleotide excision repair (GG-NER) by acting as component of the XPC complex. Cooperatively with Cetn2 appears to stabilize Xpc. May protect Xpc from proteasomal degradation. In terms of biological role, the XPC complex is proposed to represent the first factor bound at the sites of DNA damage and together with other core recognition factors, Xpa, RPA and the TFIIH complex, is part of the pre-incision (or initial recognition) complex. The XPC complex recognizes a wide spectrum of damaged DNA characterized by distortions of the DNA helix such as single-stranded loops, mismatched bubbles or single-stranded overhangs. The orientation of XPC complex binding appears to be crucial for inducing a productive NER. XPC complex is proposed to recognize and to interact with unpaired bases on the undamaged DNA strand which is followed by recruitment of the TFIIH complex and subsequent scanning for lesions in the opposite strand in a 5'-to-3' direction by the NER machinery. Cyclobutane pyrimidine dimers (CPDs) which are formed upon UV-induced DNA damage esacpe detection by the XPC complex due to a low degree of structural perurbation. Instead they are detected by the UV-DDB complex which in turn recruits and cooperates with the XPC complex in the respective DNA repair. In vitro, the Xpc:Rad23b dimer is sufficient to initiate NER; it preferentially binds to cisplatin and UV-damaged double-stranded DNA and also binds to a variety of chemically and structurally diverse DNA adducts. Xpc:Rad23b contacts DNA both 5' and 3' of a cisplatin lesion with a preference for the 5' side. Xpc:Rad23bB induces a bend in DNA upon binding. Xpc:Rad23b stimulates the activity of DNA glycosylases Tdg and Smug1. This Mus musculus (Mouse) protein is UV excision repair protein RAD23 homolog B (Rad23b).